A 53-amino-acid polypeptide reads, in one-letter code: MCTTLFLFSLAMLWRRRFTNRVEPEPSRVDGTVVGSGSDTDLQSTGREKGPVK.

C2 carries S-palmitoyl cysteine lipidation. The interval 24–53 (PEPSRVDGTVVGSGSDTDLQSTGREKGPVK) is disordered. Residues 35-45 (GSGSDTDLQST) are compositionally biased toward polar residues.

Belongs to the PRCD family. As to quaternary structure, interacts with RHO/rhodopsin; the interaction promotes PRCD stability. Palmitoylated at Cys-2. Palmitoylation is essential for protein stability and trafficking to the photoreceptor outer segment, but does not appear to be essential for membrane localization. Probably palmitoylated by ZDHHC3. Post-translationally, phosphorylated. As to expression, expressed in retina, where it localizes to both rod and cone photoreceptors (at protein level).

The protein resides in the cell projection. Its subcellular location is the cilium. The protein localises to the photoreceptor outer segment. It is found in the membrane. It localises to the endoplasmic reticulum. The protein resides in the golgi apparatus. Involved in vision. The chain is Photoreceptor disk component PRCD from Mus musculus (Mouse).